The sequence spans 434 residues: Oxysterol-binding protein homolog 5 (434 aa).

The OSBP-related domain (ORD) stretch occupies residues 18 to 371 (SSFNGDLSSL…KQVDYMNENT (354 aa)). 24–29 (LSSLSA) provides a ligand contact to a 1,2-diacyl-sn-glycero-3-phospho-(1D-myo-inositol 4-phosphate). Q96 provides a ligand contact to 20-hydroxycholesterol. Q96 contributes to the 25-hydroxycholesterol binding site. 7beta-hydroxycholesterol-binding residues include Q96 and R100. Q96 lines the cholesterol pocket. Q96 is a binding site for ergosterol. A 1,2-diacyl-sn-glycero-3-phospho-(1D-myo-inositol 4-phosphate) is bound by residues 109–112 (KPLN), 143–144 (HH), K335, E339, and R343. S389 is subject to Phosphoserine.

This sequence belongs to the OSBP family.

The protein localises to the vacuole membrane. It localises to the bud neck. In terms of biological role, lipid transport protein (LTP) involved in non-vesicular transfer of lipids between membranes. Functions in phosphoinositide-coupled directional transport of various lipids by carrying the lipid molecule in a hydrophobic pocket and transferring it between membranes through the cytosol. Involved in maintenance of intracellular sterol distribution and homeostasis. Plays a role in ergosterol synthesis. Binds and transports sterol. May be involved in ergosterol transport from the plasma membrane (PM) to the ER. This chain is Oxysterol-binding protein homolog 5, found in Saccharomyces cerevisiae (strain ATCC 204508 / S288c) (Baker's yeast).